Here is a 680-residue protein sequence, read N- to C-terminus: MKDRSSTPPLHVHVDENTPVHVHIKKLPKPSATSSQKSHKRGMKGDTVNVRRSVRVKTKVPWMPPGKSSARPVGCKWENPPHCLEITPPSSEKLVSVMRLSDLSTEDDDSGHCKMNRYDKKIDSLMNAVGCLKSEVKMQKGERQMAKRFLEERKEELEEVAHELAETEHENTVLRHNIERMKEEKDFTILQKKHLQQEKECLMSKLVEAEMDGAAAAKQVMALKDTIGKLKTEKQMTCTDINTLTRQKELLLQKLSTFGETNRTLRDLLREQHCKEDSERLMEQQGALLKRLAEADSEKARLLLLLRDKDKEVEELLQEIQCEKAQAKTASELSKSMESMRGHLQAQLRSKEAENSRLCMQIKNLERSGNQHKAEVEAIMEQLKELKQKGDRDKESLKKAIRAQKERAEKSEEYAEQLHVQLADKDLYVAEALSTLESWRSRYNQVVKDKGDLELEIIVLNDRVTDLVNQQQTLEEKMREDRDSLVERLHRQTAEYSAFKLENERLKASFAPMEDKLNQAHLEVQQLKASVKNYEGMIDNYKSQVMKTRLEADEVAAQLERCDKENKILKDEMNKEIEAARRQFQSQLADLQQLPDILKITEAKLAECQDQLQGYERKNIDLTAIISDLRSRETGGDQCPEYRVPTGDCQEGGGNPPVPAAARGENTGMWDPGKAVGERH.

Residues 27–46 (LPKPSATSSQKSHKRGMKGD) are disordered. Phosphoserine occurs at positions 68 and 69. Phosphothreonine is present on Thr-87. The residue at position 90 (Ser-90) is a Phosphoserine; by TSSK4. Residues Ser-101 and Ser-104 each carry the phosphoserine modification. The residue at position 105 (Thr-105) is a Phosphothreonine. Phosphoserine occurs at positions 110 and 124. Residue Lys-133 forms a Glycyl lysine isopeptide (Lys-Gly) (interchain with G-Cter in SUMO2) linkage. Ser-134 is modified (phosphoserine). Residues 139 to 212 (QKGERQMAKR…MSKLVEAEMD (74 aa)) are a coiled coil. The residue at position 226 (Thr-226) is a Phosphothreonine. At Ser-256 the chain carries Phosphoserine. Coiled-coil stretches lie at residues 275-418 (KEDS…AEQL) and 456-630 (EIIV…SDLR). Residues 387-410 (KQKGDRDKESLKKAIRAQKERAEK) form a disordered region. A Phosphoserine modification is found at Ser-627. Residues 632–680 (RETGGDQCPEYRVPTGDCQEGGGNPPVPAAARGENTGMWDPGKAVGERH) are disordered.

It belongs to the ODF2 family. In terms of assembly, self-associates. Associates with microtubules and forms a fibrillar structure partially linked to the microtubule network. Interacts via its C-terminus with PLK1. Interacts with ODF1. Interacts with MARK4; the interaction is required for localization of ODF2 to centrioles. Interacts with TSSK4. Interacts with AKNA. Interacts with QRICH2. Interacts with CFAP58. Interacts with BBOF1. Interacts with CCDC38. Interacts with CCDC42. Tyrosine phosphorylated. Phosphorylated on Ser-90 by TSSK4.

Its subcellular location is the cytoplasm. The protein localises to the cytoskeleton. It localises to the microtubule organizing center. It is found in the centrosome. The protein resides in the cell projection. Its subcellular location is the cilium. The protein localises to the centriole. It localises to the spindle pole. It is found in the flagellum. Its function is as follows. Seems to be a major component of sperm tail outer dense fibers (ODF). ODFs are filamentous structures located on the outside of the axoneme in the midpiece and principal piece of the mammalian sperm tail and may help to maintain the passive elastic structures and elastic recoil of the sperm tail. May have a modulating influence on sperm motility. Functions as a general scaffold protein that is specifically localized at the distal/subdistal appendages of mother centrioles. Component of the centrosome matrix required for the localization of PLK1 and NIN to the centrosomes. Required for the formation and/or maintenance of normal CETN1 assembly. This chain is Outer dense fiber protein 2 (ODF2), found in Pongo abelii (Sumatran orangutan).